The sequence spans 139 residues: Ribosomal RNA large subunit methyltransferase H (139 aa).

Residues Leu-57, Gly-88, and 107–112 (LSAMTF) each bind S-adenosyl-L-methionine.

It belongs to the RNA methyltransferase RlmH family. In terms of assembly, homodimer.

Its subcellular location is the cytoplasm. The enzyme catalyses pseudouridine(1915) in 23S rRNA + S-adenosyl-L-methionine = N(3)-methylpseudouridine(1915) in 23S rRNA + S-adenosyl-L-homocysteine + H(+). Functionally, specifically methylates the pseudouridine at position 1915 (m3Psi1915) in 23S rRNA. The protein is Ribosomal RNA large subunit methyltransferase H of Solibacter usitatus (strain Ellin6076).